A 114-amino-acid chain; its full sequence is UPF0102 protein jhp_0762 (114 aa).

This sequence belongs to the UPF0102 family.

The sequence is that of UPF0102 protein jhp_0762 from Helicobacter pylori (strain J99 / ATCC 700824) (Campylobacter pylori J99).